A 494-amino-acid polypeptide reads, in one-letter code: AAA-ATPase At2g18190 (494 aa).

Residues 13–29 form a helical membrane-spanning segment; sequence SSLFTAYASLTGFLMLF. 251-258 contributes to the ATP binding site; sequence GPPGTGKS. Positions 459–470 are enriched in basic and acidic residues; the sequence is TCRKLDGDDKHN. The interval 459–494 is disordered; the sequence is TCRKLDGDDKHNVSSTNDLKKTKKKKKGGKGKAKGN. Over residues 479–494 the composition is skewed to basic residues; it reads KTKKKKKGGKGKAKGN.

This sequence belongs to the AAA ATPase family. BCS1 subfamily. Requires Mg(2+) as cofactor.

The protein localises to the membrane. The catalysed reaction is ATP + H2O = ADP + phosphate + H(+). The polypeptide is AAA-ATPase At2g18190 (Arabidopsis thaliana (Mouse-ear cress)).